Here is a 243-residue protein sequence, read N- to C-terminus: 1-(5-phosphoribosyl)-5-[(5-phosphoribosylamino)methylideneamino] imidazole-4-carboxamide isomerase (243 aa).

Asp8 acts as the Proton acceptor in catalysis. The active-site Proton donor is the Asp129.

It belongs to the HisA/HisF family.

It localises to the cytoplasm. The catalysed reaction is 1-(5-phospho-beta-D-ribosyl)-5-[(5-phospho-beta-D-ribosylamino)methylideneamino]imidazole-4-carboxamide = 5-[(5-phospho-1-deoxy-D-ribulos-1-ylimino)methylamino]-1-(5-phospho-beta-D-ribosyl)imidazole-4-carboxamide. The protein operates within amino-acid biosynthesis; L-histidine biosynthesis; L-histidine from 5-phospho-alpha-D-ribose 1-diphosphate: step 4/9. The polypeptide is 1-(5-phosphoribosyl)-5-[(5-phosphoribosylamino)methylideneamino] imidazole-4-carboxamide isomerase (Brucella abortus (strain 2308)).